We begin with the raw amino-acid sequence, 346 residues long: Phosphoribosylformylglycinamidine cyclo-ligase (346 aa).

Belongs to the AIR synthase family.

It is found in the cytoplasm. The catalysed reaction is 2-formamido-N(1)-(5-O-phospho-beta-D-ribosyl)acetamidine + ATP = 5-amino-1-(5-phospho-beta-D-ribosyl)imidazole + ADP + phosphate + H(+). The protein operates within purine metabolism; IMP biosynthesis via de novo pathway; 5-amino-1-(5-phospho-D-ribosyl)imidazole from N(2)-formyl-N(1)-(5-phospho-D-ribosyl)glycinamide: step 2/2. This chain is Phosphoribosylformylglycinamidine cyclo-ligase, found in Photobacterium profundum (strain SS9).